Reading from the N-terminus, the 159-residue chain is Cystatin-9 (159 aa).

The first 28 residues, 1–28 (MSSPQRRKAMPWALSLLLMGFQLLVTYA), serve as a signal peptide directing secretion.

It belongs to the cystatin family. As to expression, expressed in heart, placenta, lung, liver, skeletal muscle and pancreas. Not expressed in brain. Expressed in epididymis, kidney, testis, spinal cord, and thymus with a strong expression in epididymis and kidney and a weak expression in the spinal cord and thymus.

The protein resides in the secreted. Functionally, may be involved in testis development. May play a role in hematopoietic differentiation or inflammation. Has immunomodulatory and antimicrobial functions against Francisella tularensis, a Gram-negative bacteria. This is Cystatin-9 (CST9) from Homo sapiens (Human).